The chain runs to 536 residues: Quinate permease (536 aa).

The Cytoplasmic segment spans residues 1 to 26; the sequence is MTLLALKEDRPTPKAVYNWRVYTCAA. A helical membrane pass occupies residues 27 to 47; that stretch reads IASFASCMIGYDSAFIGTTLA. Residues 48–74 are Extracellular-facing; that stretch reads LPSFKKEFDFASYTPGALALLQSNIVS. The chain crosses the membrane as a helical span at residues 75-95; it reads VYQAGAFFGSLFAFATSYFLG. At 96–98 the chain is on the cytoplasmic side; the sequence is RRK. The chain crosses the membrane as a helical span at residues 99–119; that stretch reads SLIAFSVVFIIGAAIMLAADG. At 120 to 131 the chain is on the extracellular side; it reads QGRGIAPIIAGR. A helical transmembrane segment spans residues 132–152; the sequence is VLAGIGVGGASNMVPIYISEL. Residues 153 to 160 lie on the Cytoplasmic side of the membrane; that stretch reads APPAVRGR. The chain crosses the membrane as a helical span at residues 161–181; it reads LVGIYELGWQIGGLVGFWINY. Residues 182–195 are Extracellular-facing; the sequence is GVNTTMAPTRSQWL. N-linked (GlcNAc...) asparagine glycosylation is present at Asn184. Residues 196–216 traverse the membrane as a helical segment; it reads IPFAVQLIPAGLLFLGSFWIP. The Cytoplasmic segment spans residues 217 to 285; the sequence is ESPRWLFANG…SLKQRKVQWR (69 aa). A helical transmembrane segment spans residues 286 to 306; it reads FFLGGMLFLWQNGSGINAINY. Over 307-327 the chain is Extracellular; that stretch reads YSPTVFRSIGITGTNTGFLTT. Residues 328–349 form a helical membrane-spanning segment; that stretch reads GIFGVVKMVLTIVWLLWLVDLV. Residues 350 to 352 lie on the Cytoplasmic side of the membrane; the sequence is GRR. A helical membrane pass occupies residues 353–373; it reads RMLFIGATGGSLCMWFIGAYI. At 374–389 the chain is on the extracellular side; sequence KIAGPGSTKAEDAKLT. Residues 390–410 form a helical membrane-spanning segment; that stretch reads SGGIAAIFFFYLWTAFYTPSW. Residues 411–435 are Cytoplasmic-facing; the sequence is NGTPWVINSEMFDQNTRSLGQASAA. A helical transmembrane segment spans residues 436 to 456; sequence ANNWFWNFIISRFTPQMFIKM. The Extracellular portion of the chain corresponds to 457 to 458; it reads EY. Residues 459 to 479 traverse the membrane as a helical segment; that stretch reads GVYFFFASLMLLSIVFIYFFI. The Cytoplasmic portion of the chain corresponds to 480–536; that stretch reads PETKSIPLEAMDRLFEIKPVHNANKILMAELNFDRNPEREESSLDEKDRVTQTENAV. Basic and acidic residues predominate over residues 516–530; it reads PEREESSLDEKDRVT. The interval 516–536 is disordered; sequence PEREESSLDEKDRVTQTENAV.

It belongs to the major facilitator superfamily. Sugar transporter (TC 2.A.1.1) family.

The protein localises to the membrane. This chain is Quinate permease (qa-y), found in Neurospora terricola.